A 411-amino-acid polypeptide reads, in one-letter code: NAD-dependent dihydropyrimidine dehydrogenase subunit PreA (411 aa).

Residues N76 and 134–136 contribute to the substrate site; that span reads NFS. The active-site Nucleophile is the C137. 201 to 202 serves as a coordination point for substrate; it reads NT. 2 4Fe-4S ferredoxin-type domains span residues 335-367 and 369-398; these read VYPR…WSEK and RTPH…LGEV. Positions 344, 347, 350, 354, 378, 381, 384, and 388 each coordinate [4Fe-4S] cluster.

The protein belongs to the dihydropyrimidine dehydrogenase family. As to quaternary structure, heterotetramer of 2 PreA and 2 PreT subunits. The cofactor is [4Fe-4S] cluster.

It carries out the reaction 5,6-dihydrouracil + NAD(+) = uracil + NADH + H(+). It catalyses the reaction 5,6-dihydrothymine + NAD(+) = thymine + NADH + H(+). In terms of biological role, involved in pyrimidine base degradation. Catalyzes physiologically the reduction of uracil to 5,6-dihydrouracil (DHU) by using NADH as a specific cosubstrate. It also catalyzes the reverse reaction and the reduction of thymine to 5,6-dihydrothymine (DHT). The sequence is that of NAD-dependent dihydropyrimidine dehydrogenase subunit PreA (preA) from Escherichia coli O157:H7.